Reading from the N-terminus, the 286-residue chain is Bifunctional protein FolD (286 aa).

Residues 165-167 (GRS) and serine 190 contribute to the NADP(+) site.

It belongs to the tetrahydrofolate dehydrogenase/cyclohydrolase family. Homodimer.

It catalyses the reaction (6R)-5,10-methylene-5,6,7,8-tetrahydrofolate + NADP(+) = (6R)-5,10-methenyltetrahydrofolate + NADPH. The catalysed reaction is (6R)-5,10-methenyltetrahydrofolate + H2O = (6R)-10-formyltetrahydrofolate + H(+). Its pathway is one-carbon metabolism; tetrahydrofolate interconversion. Catalyzes the oxidation of 5,10-methylenetetrahydrofolate to 5,10-methenyltetrahydrofolate and then the hydrolysis of 5,10-methenyltetrahydrofolate to 10-formyltetrahydrofolate. In Staphylococcus aureus (strain bovine RF122 / ET3-1), this protein is Bifunctional protein FolD.